A 164-amino-acid chain; its full sequence is Pyruvoyl-dependent arginine decarboxylase (164 aa).

Position 52 is a pyruvic acid (Ser) (Ser52).

This sequence belongs to the PdaD family. It depends on pyruvate as a cofactor.

The enzyme catalyses L-arginine + H(+) = agmatine + CO2. The polypeptide is Pyruvoyl-dependent arginine decarboxylase (Methanococcus vannielii (strain ATCC 35089 / DSM 1224 / JCM 13029 / OCM 148 / SB)).